A 233-amino-acid chain; its full sequence is Purine nucleoside phosphorylase DeoD-type (233 aa).

An a purine D-ribonucleoside-binding site is contributed by H4. Residues G20, R24, R43, and 87-90 (RIGT) contribute to the phosphate site. A purine D-ribonucleoside contacts are provided by residues 179–181 (EME) and 203–204 (SD). D204 (proton donor) is an active-site residue.

Belongs to the PNP/UDP phosphorylase family. Homohexamer; trimer of homodimers.

The enzyme catalyses a purine D-ribonucleoside + phosphate = a purine nucleobase + alpha-D-ribose 1-phosphate. It catalyses the reaction a purine 2'-deoxy-D-ribonucleoside + phosphate = a purine nucleobase + 2-deoxy-alpha-D-ribose 1-phosphate. Catalyzes the reversible phosphorolytic breakdown of the N-glycosidic bond in the beta-(deoxy)ribonucleoside molecules, with the formation of the corresponding free purine bases and pentose-1-phosphate. The sequence is that of Purine nucleoside phosphorylase DeoD-type from Helicobacter pylori (strain HPAG1).